Reading from the N-terminus, the 83-residue chain is Mu-theraphotoxin-Hhn2g (83 aa).

The signal sequence occupies residues 1–21 (MKASMYLALAGLVLLFVVGYA). A propeptide spanning residues 22–48 (SESEEKEFPRELLSKIFAVDDFKGEER) is cleaved from the precursor. 2 disulfides stabilise this stretch: C50/C65 and C57/C70. L81 carries the leucine amide modification.

This sequence belongs to the neurotoxin 10 (Hwtx-1) family. 15 (Hntx-3) subfamily. In terms of assembly, monomer. In terms of tissue distribution, expressed by the venom gland.

It is found in the secreted. Functionally, lethal neurotoxin. Selectively blocks tetrodotoxin-sensitive voltage-gated sodium channels (Nav). Does not affect tetrodotoxin-resistant voltage-gated sodium channels or calcium channels. In Cyriopagopus hainanus (Chinese bird spider), this protein is Mu-theraphotoxin-Hhn2g.